The primary structure comprises 346 residues: NADH-ubiquinone oxidoreductase chain 2 (346 aa).

11 helical membrane-spanning segments follow: residues Met1–Ile21, His25–Ser45, Phe60–Ala80, Cys95–Phe115, Leu124–Met144, Leu149–Gly169, Ile178–Val195, Leu200–Leu219, Ala242–Pro262, Glu274–Leu294, and Ala326–Val346.

It belongs to the complex I subunit 2 family.

Its subcellular location is the mitochondrion inner membrane. The enzyme catalyses a ubiquinone + NADH + 5 H(+)(in) = a ubiquinol + NAD(+) + 4 H(+)(out). Its function is as follows. Core subunit of the mitochondrial membrane respiratory chain NADH dehydrogenase (Complex I) that is believed to belong to the minimal assembly required for catalysis. Complex I functions in the transfer of electrons from NADH to the respiratory chain. The immediate electron acceptor for the enzyme is believed to be ubiquinone. The sequence is that of NADH-ubiquinone oxidoreductase chain 2 (MT-ND2) from Mareca americana (American wigeon).